Reading from the N-terminus, the 701-residue chain is Elongation factor G 2 (701 aa).

The tr-type G domain maps to E8 to A290. Residues A17–T24, D88–H92, and N142–D145 contribute to the GTP site.

Belongs to the TRAFAC class translation factor GTPase superfamily. Classic translation factor GTPase family. EF-G/EF-2 subfamily.

The protein resides in the cytoplasm. Functionally, catalyzes the GTP-dependent ribosomal translocation step during translation elongation. During this step, the ribosome changes from the pre-translocational (PRE) to the post-translocational (POST) state as the newly formed A-site-bound peptidyl-tRNA and P-site-bound deacylated tRNA move to the P and E sites, respectively. Catalyzes the coordinated movement of the two tRNA molecules, the mRNA and conformational changes in the ribosome. This Cupriavidus pinatubonensis (strain JMP 134 / LMG 1197) (Cupriavidus necator (strain JMP 134)) protein is Elongation factor G 2.